The primary structure comprises 133 residues: Fluoride-specific ion channel FluC 3 (133 aa).

3 consecutive transmembrane segments (helical) span residues 7-27 (ILVL…SGYV), 37-57 (WGTF…AGLG), and 60-80 (LGAI…LLGG). Na(+) is bound by residues G79 and T82. Residues 107–127 (IVASALLCVLAVAAGYGGIMW) form a helical membrane-spanning segment.

This sequence belongs to the fluoride channel Fluc/FEX (TC 1.A.43) family.

The protein resides in the cell inner membrane. It catalyses the reaction fluoride(in) = fluoride(out). Na(+) is not transported, but it plays an essential structural role and its presence is essential for fluoride channel function. Fluoride-specific ion channel. Important for reducing fluoride concentration in the cell, thus reducing its toxicity. This is Fluoride-specific ion channel FluC 3 from Brucella suis biovar 1 (strain 1330).